A 179-amino-acid chain; its full sequence is MARLKEIYRKEIAPKLKEELKLGNVMEVPRVTKITLNMGLGEAIGDKKVIENAVADLEKITGQKVVVTYARKSIAGFKVREGWPIGVKVTLRRDRMYEFLDRLLSISLPRVRDFRGLNAKSFDGRGNYSMGVKEQIIFPEIDYDKIDALRGLDITLTTTAKNDDEGRALLRAFKFPFRN.

This sequence belongs to the universal ribosomal protein uL5 family. Part of the 50S ribosomal subunit; part of the 5S rRNA/L5/L18/L25 subcomplex. Contacts the 5S rRNA and the P site tRNA. Forms a bridge to the 30S subunit in the 70S ribosome.

This is one of the proteins that bind and probably mediate the attachment of the 5S RNA into the large ribosomal subunit, where it forms part of the central protuberance. In the 70S ribosome it contacts protein S13 of the 30S subunit (bridge B1b), connecting the 2 subunits; this bridge is implicated in subunit movement. Contacts the P site tRNA; the 5S rRNA and some of its associated proteins might help stabilize positioning of ribosome-bound tRNAs. This chain is Large ribosomal subunit protein uL5, found in Pseudomonas syringae pv. tomato (strain ATCC BAA-871 / DC3000).